The chain runs to 326 residues: Methionine import ATP-binding protein MetN (326 aa).

One can recognise an ABC transporter domain in the interval 1–226 (MVFYTIGPQT…PQQPITRQFV (226 aa)). Residue 23–30 (GYSGAGKS) coordinates ATP.

Belongs to the ABC transporter superfamily. Methionine importer (TC 3.A.1.24) family. In terms of assembly, the complex is composed of two ATP-binding proteins (MetN), two transmembrane proteins (MetI) and a solute-binding protein (MetQ).

The protein localises to the cell inner membrane. The enzyme catalyses L-methionine(out) + ATP + H2O = L-methionine(in) + ADP + phosphate + H(+). The catalysed reaction is D-methionine(out) + ATP + H2O = D-methionine(in) + ADP + phosphate + H(+). Its function is as follows. Part of the ABC transporter complex MetNIQ involved in methionine import. Responsible for energy coupling to the transport system. The sequence is that of Methionine import ATP-binding protein MetN from Erwinia pyrifoliae (strain DSM 12162 / Ep1/96).